Consider the following 144-residue polypeptide: Protein CT_635 (144 aa).

The tract at residues 110 to 144 (EVTNDIGHSSHKSPTPKKTKSSSQKKSKKKNWIPL) is disordered. Residues 118–144 (SSHKSPTPKKTKSSSQKKSKKKNWIPL) show a composition bias toward basic residues.

Belongs to the chlamydial CPn_0742/CT_635/TC_0003 family.

The polypeptide is Protein CT_635 (Chlamydia trachomatis serovar D (strain ATCC VR-885 / DSM 19411 / UW-3/Cx)).